Here is a 130-residue protein sequence, read N- to C-terminus: Small ribosomal subunit protein uS9 (130 aa).

It belongs to the universal ribosomal protein uS9 family.

The chain is Small ribosomal subunit protein uS9 from Bacillus mycoides (strain KBAB4) (Bacillus weihenstephanensis).